We begin with the raw amino-acid sequence, 510 residues long: Protein phosphatase 1H (510 aa).

One can recognise a PPM-type phosphatase domain in the interval 73–503 (STGYAEVINA…DDISVYVIPL (431 aa)). Disordered stretches follow at residues 105-128 (VQST…EGLQ) and 188-225 (LGEE…PTRF).

The protein belongs to the PP2C family.

It is found in the nucleus. Its subcellular location is the cytoplasm. It catalyses the reaction O-phospho-L-seryl-[protein] + H2O = L-seryl-[protein] + phosphate. The catalysed reaction is O-phospho-L-threonyl-[protein] + H2O = L-threonyl-[protein] + phosphate. In Xenopus tropicalis (Western clawed frog), this protein is Protein phosphatase 1H (ppm1h).